The chain runs to 369 residues: Anhydro-N-acetylmuramic acid kinase (369 aa).

12 to 19 (GTSMDGID) contributes to the ATP binding site.

Belongs to the anhydro-N-acetylmuramic acid kinase family.

The catalysed reaction is 1,6-anhydro-N-acetyl-beta-muramate + ATP + H2O = N-acetyl-D-muramate 6-phosphate + ADP + H(+). It functions in the pathway amino-sugar metabolism; 1,6-anhydro-N-acetylmuramate degradation. The protein operates within cell wall biogenesis; peptidoglycan recycling. In terms of biological role, catalyzes the specific phosphorylation of 1,6-anhydro-N-acetylmuramic acid (anhMurNAc) with the simultaneous cleavage of the 1,6-anhydro ring, generating MurNAc-6-P. Is required for the utilization of anhMurNAc either imported from the medium or derived from its own cell wall murein, and thus plays a role in cell wall recycling. The protein is Anhydro-N-acetylmuramic acid kinase of Shewanella sediminis (strain HAW-EB3).